Consider the following 454-residue polypeptide: Asparagine--tRNA ligase (454 aa).

This sequence belongs to the class-II aminoacyl-tRNA synthetase family. Homodimer.

It is found in the cytoplasm. The catalysed reaction is tRNA(Asn) + L-asparagine + ATP = L-asparaginyl-tRNA(Asn) + AMP + diphosphate + H(+). This Microcystis aeruginosa (strain NIES-843 / IAM M-2473) protein is Asparagine--tRNA ligase.